The primary structure comprises 965 residues: Translation initiation factor IF-2 (965 aa).

Residues 94–375 are disordered; that stretch reads RTFVRRDEAA…RGKHQESTTF (282 aa). Positions 104 to 115 are enriched in low complexity; sequence EQAAEATGNGQE. A compositionally biased stretch (basic and acidic residues) spans 121–177; sequence ELQRREEEARHEAELLEKQAQELKARQEQLAREEAERQAREQAAEAERRRAEEEAAK. The span at 181–191 shows a compositional bias: low complexity; sequence AAVAEAAAAAR. Over residues 192-253 the composition is skewed to basic and acidic residues; the sequence is EQAEQERASQ…KAEAEARAIR (62 aa). Pro residues predominate over residues 267–276; that stretch reads PEPPPKPAEA. The segment covering 303 to 320 has biased composition (low complexity); that stretch reads KKPAPAAAAQPAATTQPA. Residues 351–364 are compositionally biased toward gly residues; sequence TSGGVDRGWRGGPK. The region spanning 465–634 is the tr-type G domain; it reads PRPPVVTVMG…LLQAEVLELK (170 aa). The segment at 474–481 is G1; sequence GHVDHGKT. 474-481 lines the GTP pocket; it reads GHVDHGKT. Residues 499-503 form a G2 region; sequence GITQH. A G3 region spans residues 520 to 523; that stretch reads DTPG. GTP contacts are provided by residues 520–524 and 574–577; these read DTPGH and NKID. Residues 574–577 form a G4 region; that stretch reads NKID. The segment at 610-612 is G5; it reads SAK.

This sequence belongs to the TRAFAC class translation factor GTPase superfamily. Classic translation factor GTPase family. IF-2 subfamily.

Its subcellular location is the cytoplasm. Its function is as follows. One of the essential components for the initiation of protein synthesis. Protects formylmethionyl-tRNA from spontaneous hydrolysis and promotes its binding to the 30S ribosomal subunits. Also involved in the hydrolysis of GTP during the formation of the 70S ribosomal complex. This chain is Translation initiation factor IF-2, found in Paraburkholderia phymatum (strain DSM 17167 / CIP 108236 / LMG 21445 / STM815) (Burkholderia phymatum).